The following is a 729-amino-acid chain: Rab-like protein 6 (729 aa).

Met-1 bears the N-acetylmethionine mark. Residues 39 to 279 (GVQYNMKIVI…IFLEMMEARS (241 aa)) are small GTPase-like. GTP is bound by residues 50 to 57 (GDRNTGKT), 100 to 104 (DVVDK), and 177 to 179 (YRD). The tract at residues 281–729 (GHASPLAANG…HPGGGDYEEL (449 aa)) is disordered. The span at 290-315 (GQSPSPGSQSPVVPAGAVSTGSSSPG) shows a compositional bias: low complexity. Residues 331 to 351 (SSVPPVPPSEALPPPACPSAP) show a composition bias toward pro residues. Basic and acidic residues predominate over residues 395–416 (PDDRLDRSFLEDTTPARDEKKV). Ser-402, Ser-425, Ser-427, Ser-470, Ser-471, Ser-492, Ser-525, and Ser-577 each carry phosphoserine. A compositionally biased stretch (polar residues) spans 489 to 502 (QQCSEPETKWSSIP). Residues 581–595 (DTQRRADDFPVRDDP) are compositionally biased toward basic and acidic residues. Position 596 is a phosphoserine (Ser-596). The segment covering 596–605 (SDVTDEDEGP) has biased composition (acidic residues). Thr-599 is subject to Phosphothreonine. A compositionally biased stretch (pro residues) spans 606-615 (AEPPPPPKLP). Residues 635-652 (AGPKESSEEGKEGKTPSK) show a composition bias toward basic and acidic residues. Residues Ser-640 and Ser-641 each carry the phosphoserine modification. Residues 655–693 (KKKKKKGKEEEEKAAKKKSKHKKSKDKEEGKEERRRRQQ) are interaction with CDKN2A. Over residues 669–678 (AKKKSKHKKS) the composition is skewed to basic residues. Residues 679 to 689 (KDKEEGKEERR) are compositionally biased toward basic and acidic residues. A compositionally biased stretch (gly residues) spans 711–729 (LGGGAPGGRHPGGGDYEEL).

The protein belongs to the small GTPase superfamily. Rab family. Isoform 1 is O-glycosylated, while other isoforms are not.

Its subcellular location is the cytoplasm. It is found in the nucleus. May enhance cellular proliferation. May reduce growth inhibitory activity of CDKN2A. This Homo sapiens (Human) protein is Rab-like protein 6 (RABL6).